The chain runs to 228 residues: Serum amyloid P-component (228 aa).

The signal sequence occupies residues 1 to 20 (MDKLLLWMSVFTSLLSEAFA). Positions 25-224 (NQKVFVFPRE…YVVIKPRMWD (200 aa)) constitute a Pentraxin (PTX) domain. Asn52 carries N-linked (GlcNAc...) asparagine glycosylation. Cys56 and Cys115 are joined by a disulfide. Residues Asp78, Asn79, Glu156, Gln157, Asp158, and Gln168 each contribute to the Ca(2+) site.

This sequence belongs to the pentraxin family. As to quaternary structure, homopentamer. Pentraxin (or pentaxin) have a discoid arrangement of 5 non-covalently bound subunits. It depends on Ca(2+) as a cofactor.

The protein resides in the secreted. In Rattus norvegicus (Rat), this protein is Serum amyloid P-component (Apcs).